The primary structure comprises 129 residues: NADH-ubiquinone oxidoreductase chain 3 (129 aa).

3 helical membrane-spanning segments follow: residues 4–24 (FYMY…WLLA), 48–68 (AAFS…DLEI), and 82–102 (GLYG…AFIL).

It belongs to the complex I subunit 3 family.

Its subcellular location is the mitochondrion membrane. The catalysed reaction is a ubiquinone + NADH + 5 H(+)(in) = a ubiquinol + NAD(+) + 4 H(+)(out). Functionally, core subunit of the mitochondrial membrane respiratory chain NADH dehydrogenase (Complex I) that is believed to belong to the minimal assembly required for catalysis. Complex I functions in the transfer of electrons from NADH to the respiratory chain. The immediate electron acceptor for the enzyme is believed to be ubiquinone. The protein is NADH-ubiquinone oxidoreductase chain 3 (NAD3) of Candida albicans (strain SC5314 / ATCC MYA-2876) (Yeast).